The primary structure comprises 209 residues: Response regulator protein VraR (209 aa).

In terms of domain architecture, Response regulatory spans 4 to 120 (KVLFVDDHEM…DIADAVRKTY (117 aa)). D55 is subject to 4-aspartylphosphate. The HTH luxR-type domain occupies 141–206 (RAELYEMLTE…QAVIYAFQHN (66 aa)). A DNA-binding region (H-T-H motif) is located at residues 165 to 184 (NQEIASASHITIKTVKTHVS).

Phosphorylated by VraS.

It localises to the cytoplasm. Functionally, member of the two-component regulatory system VraS/VraR involved in the control of the cell wall peptidoglycan biosynthesis. This is Response regulator protein VraR (vraR) from Staphylococcus epidermidis (strain ATCC 35984 / DSM 28319 / BCRC 17069 / CCUG 31568 / BM 3577 / RP62A).